The following is a 536-amino-acid chain: CRISPR-associated DNA-binding protein Cas12m (536 aa).

The tract at residues 1-59 (MPFGKKARHVKAYQFGADAPQEGMEAVLEQHRLRTDYYNALVEMELRQREERTALLANL) is recognition domain (REC1-N). The segment at 60–105 (AAESGLESPNQVYERLKAAGEKGIRKHPEYVAARERQKALYGHPRL) is recognition domain (REC2). A recognition domain (REC1-C) region spans residues 106–159 (LELQSRQREERNALRRSFGAKGLYSSNYLDVERAFDKARQSPELRFRRYSPHEG). The interval 160-257 (RLAVLYTEGL…RWTVSVVVEV (98 aa)) is wedge domain (WED). A linker region spans residues 258–270 (EGPPVASPTGRGA). The tract at residues 271-481 (VAVDLGWRRV…QRGKPVRKLN (211 aa)) is ruvC-I. Residues 482–516 (PAHTTTDCHACGGALVGDPAKELRLYCPTCERFYD) are target nucleic-acid binding (TNB). Positions 489, 492, 508, and 511 each coordinate Zn(2+). The tract at residues 517–536 (QDENAARNLLRRAQEVQAQV) is ruvC-II. Mg(2+) is bound at residue Asp518.

Belongs to the CRISPR-associated DNA-binding protein Cas12m family. Mg(2+) serves as cofactor. The cofactor is Zn(2+).

Its activity is regulated as follows. Pre-crRNA processing is inhibited by EDTA. Its function is as follows. CRISPR (clustered regularly interspaced short palindromic repeat), is an adaptive immune system that provides protection against mobile genetic elements (viruses, transposable elements and conjugative plasmids). CRISPR clusters contain sequences complementary to antecedent mobile elements and target invading nucleic acids. CRISPR clusters are transcribed and processed into CRISPR RNA (crRNA). Recognizes a short motif in the CRISPR repeat sequences (the 5' PAM or protospacer adjacent motif, 5'-TT/CN-3' in this organism) to help distinguish self versus nonself, as targets within the bacterial CRISPR locus do not have PAMs. Cas12m-crRNA binds DNA in a PAM-dependent, crRNA-guided fashion. DNA-binding probably inhibits transcription, leading to gene silencing. No dsDNA, ssDNA or RNA nuclease activity is seen for the crRNA-Cas12m complex. Upon expression in E.coli as a CRISPR region preferentially binds to its associated crRNA. Is required to process pre-crRNA to mature crRNA without a tracrRNA; processing is Mg(2+)-dependent and does not require the predicted RuvC domain catalytic site. This chain is CRISPR-associated DNA-binding protein Cas12m, found in Allomeiothermus silvanus (strain ATCC 700542 / DSM 9946 / NBRC 106475 / NCIMB 13440 / VI-R2) (Thermus silvanus).